The primary structure comprises 412 residues: MDSKKYSTLKERFLRYVKFNTRSDDASETIPSTPSQMEFAKMLKKELEELGLSNIFINKACFVNATLPSNIDKKVATVGFIAHMDTADFNAEGISPQIVENYDGKDIVLNKEQNIVLKVEEFPNLKNYISKTLITTDGTTLLGADDKSGIVEIIEAVKYLKEHPEIKHGDIKIAFGPDEEIGRGADYFDVKEFAADYAYTMDGGPIGELEYESFNAAQAKFKIKGVSVHPGTAKGKMINASLIASEIIEMFPKDEVPEKTEGYEGFYFLDEMKSNCEEGEVVYIIRDHDKAKFLAKKEFVKELVEKVNKKYGREVVKLELKDEYYNMGEIIKDHMYVVDIAKQAMENLGIKPLIKAIRGGTDGSKISFMGLPTPNIFAGGENFHGKYEFVALESMEKATDVIVEIVKLNAER.

H83 is a Zn(2+) binding site. D85 is a catalytic residue. D145 contributes to the Zn(2+) binding site. The active-site Proton acceptor is E179. Zn(2+) contacts are provided by E180, D202, and H384.

The protein belongs to the peptidase M20B family. Zn(2+) serves as cofactor.

The protein resides in the cytoplasm. It carries out the reaction Release of the N-terminal residue from a tripeptide.. Cleaves the N-terminal amino acid of tripeptides. This Fusobacterium nucleatum subsp. nucleatum (strain ATCC 25586 / DSM 15643 / BCRC 10681 / CIP 101130 / JCM 8532 / KCTC 2640 / LMG 13131 / VPI 4355) protein is Peptidase T.